The chain runs to 690 residues: Glycine--tRNA ligase beta subunit (690 aa).

This sequence belongs to the class-II aminoacyl-tRNA synthetase family. As to quaternary structure, tetramer of two alpha and two beta subunits.

It is found in the cytoplasm. It carries out the reaction tRNA(Gly) + glycine + ATP = glycyl-tRNA(Gly) + AMP + diphosphate. In Desulfatibacillum aliphaticivorans, this protein is Glycine--tRNA ligase beta subunit.